The chain runs to 776 residues: Protein translocase subunit SecA 2 (776 aa).

ATP contacts are provided by residues glutamine 80, 98 to 102 (GEGKT), and aspartate 486.

The protein belongs to the SecA family. Monomer and homodimer. Part of the essential Sec protein translocation apparatus which comprises SecA, SecYEG and auxiliary proteins SecDF. Other proteins may also be involved.

It is found in the cell membrane. Its subcellular location is the cytoplasm. The catalysed reaction is ATP + H2O + cellular proteinSide 1 = ADP + phosphate + cellular proteinSide 2.. Part of the Sec protein translocase complex. Interacts with the SecYEG preprotein conducting channel. Has a central role in coupling the hydrolysis of ATP to the transfer of proteins into and across the cell membrane, serving as an ATP-driven molecular motor driving the stepwise translocation of polypeptide chains across the membrane. This chain is Protein translocase subunit SecA 2, found in Listeria monocytogenes serotype 1/2a (strain 10403S).